We begin with the raw amino-acid sequence, 319 residues long: Ribosomal RNA large subunit methyltransferase F (319 aa).

It belongs to the methyltransferase superfamily. METTL16/RlmF family.

The protein localises to the cytoplasm. The catalysed reaction is adenosine(1618) in 23S rRNA + S-adenosyl-L-methionine = N(6)-methyladenosine(1618) in 23S rRNA + S-adenosyl-L-homocysteine + H(+). Functionally, specifically methylates the adenine in position 1618 of 23S rRNA. The sequence is that of Ribosomal RNA large subunit methyltransferase F from Aliivibrio fischeri (strain ATCC 700601 / ES114) (Vibrio fischeri).